We begin with the raw amino-acid sequence, 149 residues long: MKCPFCGNLETQVVETRVSEDADFIRRRRQCGACEKRFTTYERPDVNFPAIVKKDGRRIEYKRGKILGSMNLALRKRPVSTEQIDSAIERIEEKLLSLGVREVPSNRLGELVMRELKKLDKVAYVRFASVYRSFEDIDEFKTLVDEVRR.

A zinc finger spans residues 3-34 (CPFCGNLETQVVETRVSEDADFIRRRRQCGAC). Residues 49 to 139 (PAIVKKDGRR…VYRSFEDIDE (91 aa)) form the ATP-cone domain.

Belongs to the NrdR family. Zn(2+) serves as cofactor.

Negatively regulates transcription of bacterial ribonucleotide reductase nrd genes and operons by binding to NrdR-boxes. This is Transcriptional repressor NrdR from Polaromonas sp. (strain JS666 / ATCC BAA-500).